A 1059-amino-acid polypeptide reads, in one-letter code: Translation initiation factor IF-2 (1059 aa).

Composition is skewed to polar residues over residues 55–75 (LPHS…NQDS) and 107–126 (KINN…NNQV). 3 disordered regions span residues 55–81 (LPHS…GYNE), 93–394 (PKPL…RLRL), and 418–468 (SLSL…QSAE). Over residues 178–187 (DSNEKSKVEV) the composition is skewed to basic and acidic residues. Polar residues predominate over residues 202-211 (LNRNLRNTGV). Basic residues predominate over residues 216-229 (QKNKKPKQEGKKRK). Basic and acidic residues-rich tracts occupy residues 230 to 252 (DKEE…DTSI) and 259 to 273 (SKKE…RESV). A compositionally biased stretch (polar residues) spans 274-284 (KTSASDTSSQL). 2 stretches are compositionally biased toward basic and acidic residues: residues 291–300 (KPTVKLKQEQ) and 359–368 (LTKDKKVSKW). The span at 452–463 (SHESVQSESNEQ) shows a compositional bias: low complexity. Positions 556 to 733 (RRPPVVTIMG…EVEDLQANPE (178 aa)) constitute a tr-type G domain. The tract at residues 565 to 572 (GHVDHGKT) is G1. 565–572 (GHVDHGKT) contributes to the GTP binding site. A G2 region spans residues 590–594 (GITQH). Residues 615–618 (DTPG) form a G3 region. GTP is bound by residues 615–619 (DTPGH) and 669–672 (NKID). The G4 stretch occupies residues 669–672 (NKID). The interval 705–707 (SAI) is G5.

Belongs to the TRAFAC class translation factor GTPase superfamily. Classic translation factor GTPase family. IF-2 subfamily.

The protein localises to the cytoplasm. Functionally, one of the essential components for the initiation of protein synthesis. Protects formylmethionyl-tRNA from spontaneous hydrolysis and promotes its binding to the 30S ribosomal subunits. Also involved in the hydrolysis of GTP during the formation of the 70S ribosomal complex. This Trichodesmium erythraeum (strain IMS101) protein is Translation initiation factor IF-2.